A 561-amino-acid chain; its full sequence is MGVQSTANLPKETVSHLDTAPTPKPGVLLQVRAGRIKKGALGGEITSAIYKQQHDGPVFCSATGVLGDEHASSGHGGTERAVHQYNPDHYPDWRAENPPEPDLYDVGAYGENLVTTNMSDENVCIGDIYKLGDDVLLEVSEPRHPCFKLNSRFKWPRALKRTIRTGRAGWNMRVLKTGNICKGDTISLLERPYPKWSVLNVQRVIRARNVSLNLLAECTQLPMTDLFLDIAKERLRSAPKTYTLVDAHLVAQRVRKLTFALKEPLTIVNPAFDPYAFAQVTFGRETKFERSYSIVDGDIYKFSLGVSLDRQSRGGSAYLHNELKIGDQIEMSPGSNPGAMENDAKCDESLTRVLIVGGIGITAFLPSMRDWESKGLPYHLHYAIRSLEEAAFLDQLPKDKTTLYIRSEGQRLDISGAIPKPNHDGAYNARIFSCGPSGMMKECETVAKELGYPDHMLHFEDFGSGGGGDLGEPFEVEVDEPDSNRHETMTVPPNKTLLDVLNDAGFDVLYSCKSGACGACKVELCEGKVDYKSTALLGKEKGKALQACVDRGIGRLRIEID.

The tract at residues 1 to 26 (MGVQSTANLPKETVSHLDTAPTPKPG) is disordered. Residues 52–189 (QQHDGPVFCS…ICKGDTISLL (138 aa)) enclose the MOSC domain. The region spanning 237–342 (SAPKTYTLVD…PGSNPGAMEN (106 aa)) is the FAD-binding FR-type domain. FMN-binding positions include 288-289 (FE), 305-307 (GVS), 313-316 (RGGS), and threonine 362. The region spanning 474-561 (FEVEVDEPDS…GIGRLRIEID (88 aa)) is the 2Fe-2S ferredoxin-type domain. Cysteine 512 provides a ligand contact to [2Fe-2S] cluster. Residue serine 514 participates in FMN binding. The [2Fe-2S] cluster site is built by cysteine 517, cysteine 520, and cysteine 548.

It belongs to the PDR/VanB family. Monomer. FMN is required as a cofactor.

Reductase; part of the Fusarium detoxification of benzoxazolinone cluster 2 (FDB2) involved in the degradation of benzoxazolinones produced by the host plant. Maize, wheat, and rye produce the 2 benzoxazinone phytoanticipins 2,4-dihy-droxy-7-methoxy-1,4-benzoxazin-3-one (DIMBOA) and 2,4-dihydroxy-1,4-benzoxazin-3-one (DIBOA) that, due to their inherent instability once released, spontaneously degrade to the more stable corresponding benzoxazolinones, 6-methoxy-2-benzoxazolinone (MBOA) and 2-benzoxazolinone (BOA), respectively. The first step in the detoxification of benzoxazolinones involves the hydrolysis of the cyclic ester bond of benzoxazolinones by the FDB1 cluster gamma-lactamase MBL1 to aminophenols. MBL1 is able to convert BOA into 2-aminophenol (2-AP), as well as MBOA into 5-methoxy-2-aminophenol (2-AMP). The FDB2 cluster N-malonyltransferase FDB2/NAT1 then metabolizes aminophenols via N-malonylation to non-toxic malonamic acids. FDB2/NAT1 converts 2-AP into N-(2-hydroxyphenyl) malonamic acid (HPMA) and 2-AMP into N-(2-hydroxy-4-methoxyphenyl) malonamic acid (HMPMA). The duplicated dienlactone hydrolases DLH1 and DLH2 may provide redundant function for hydrolyzing the lactone moiety in the BOA molecule. The roles of the amidases an other enzymes encoded by the 2 FDB clusters have not been identified so far. This Gibberella moniliformis (strain M3125 / FGSC 7600) (Maize ear and stalk rot fungus) protein is Reductase FVEG_12641.